The chain runs to 430 residues: Protein translocase subunit SecY (430 aa).

10 consecutive transmembrane segments (helical) span residues 18–38, 68–88, 117–137, 147–167, 174–194, 217–237, 270–290, 308–328, 368–388, and 389–409; these read IFFT…PAPG, FSIF…MQLL, FAII…NNYL, VMSY…LIWL, FGVG…TLPS, ILGL…VLEA, VIPV…TLFF, NIGM…YAFV, FVGS…TKFM, and GLPQ…GVAI.

The protein belongs to the SecY/SEC61-alpha family. In terms of assembly, component of the Sec protein translocase complex. Heterotrimer consisting of SecY, SecE and SecG subunits. The heterotrimers can form oligomers, although 1 heterotrimer is thought to be able to translocate proteins. Interacts with the ribosome. Interacts with SecDF, and other proteins may be involved. Interacts with SecA.

The protein resides in the cell membrane. Functionally, the central subunit of the protein translocation channel SecYEG. Consists of two halves formed by TMs 1-5 and 6-10. These two domains form a lateral gate at the front which open onto the bilayer between TMs 2 and 7, and are clamped together by SecE at the back. The channel is closed by both a pore ring composed of hydrophobic SecY resides and a short helix (helix 2A) on the extracellular side of the membrane which forms a plug. The plug probably moves laterally to allow the channel to open. The ring and the pore may move independently. In Staphylococcus epidermidis (strain ATCC 35984 / DSM 28319 / BCRC 17069 / CCUG 31568 / BM 3577 / RP62A), this protein is Protein translocase subunit SecY.